We begin with the raw amino-acid sequence, 123 residues long: Small ribosomal subunit protein bS18 (123 aa).

Polar residues predominate over residues 1-10; the sequence is MADETTVSTP. A disordered region spans residues 1-52; sequence MADETTVSTPAASGTETPSTGGGGAPQGRPQGGPRGDRGPRPGGSGRDGGRK. Residues 20 to 34 are compositionally biased toward gly residues; sequence TGGGGAPQGRPQGGP.

Belongs to the bacterial ribosomal protein bS18 family. In terms of assembly, part of the 30S ribosomal subunit. Forms a tight heterodimer with protein bS6.

Its function is as follows. Binds as a heterodimer with protein bS6 to the central domain of the 16S rRNA, where it helps stabilize the platform of the 30S subunit. The polypeptide is Small ribosomal subunit protein bS18 (Koribacter versatilis (strain Ellin345)).